The sequence spans 108 residues: Parvalbumin beta (108 aa).

EF-hand domains lie at 38 to 73 (KSTDQVKKIFGILDQDKSGFIEEDELQLFLQNFSST) and 77 to 108 (LTAAETKAFMAAGDTDGDGKIGVDEFQALVKA). Residues aspartate 51, aspartate 53, serine 55, phenylalanine 57, glutamate 59, glutamate 62, aspartate 90, aspartate 92, aspartate 94, lysine 96, and glutamate 101 each contribute to the Ca(2+) site.

This sequence belongs to the parvalbumin family.

In muscle, parvalbumin is thought to be involved in relaxation after contraction. It binds two calcium ions. In Graptemys geographica (Common map turtle), this protein is Parvalbumin beta.